The following is a 487-amino-acid chain: NADH-quinone oxidoreductase subunit N (487 aa).

The next 13 membrane-spanning stretches (helical) occupy residues 7–27 (LTLI…ILIT), 37–57 (LVSI…APAL), 81–101 (FAKI…PAFF), 112–132 (PVLV…GDLI), 166–186 (FVLG…VYGF), 207–227 (ALFG…AVPF), 237–257 (GAPT…AVAL), 276–296 (IVIF…IGQT), 307–327 (INNV…GLSA), 329–349 (LTYL…LLML), 373–393 (LAWC…LLGF), 407–427 (DMVL…FYYI), and 452–472 (VLLI…TGWL).

It belongs to the complex I subunit 2 family. In terms of assembly, NDH-1 is composed of 14 different subunits. Subunits NuoA, H, J, K, L, M, N constitute the membrane sector of the complex.

Its subcellular location is the cell inner membrane. The catalysed reaction is a quinone + NADH + 5 H(+)(in) = a quinol + NAD(+) + 4 H(+)(out). In terms of biological role, NDH-1 shuttles electrons from NADH, via FMN and iron-sulfur (Fe-S) centers, to quinones in the respiratory chain. The immediate electron acceptor for the enzyme in this species is believed to be ubiquinone. Couples the redox reaction to proton translocation (for every two electrons transferred, four hydrogen ions are translocated across the cytoplasmic membrane), and thus conserves the redox energy in a proton gradient. The chain is NADH-quinone oxidoreductase subunit N from Erythrobacter litoralis (strain HTCC2594).